Consider the following 199-residue polypeptide: Molybdenum cofactor guanylyltransferase (199 aa).

GTP is bound by residues 12 to 14 (LAG), Lys25, Asn53, Asp71, and Asp101. Mg(2+) is bound at residue Asp101.

It belongs to the MobA family. As to quaternary structure, monomer. Mg(2+) is required as a cofactor.

The protein localises to the cytoplasm. The enzyme catalyses Mo-molybdopterin + GTP + H(+) = Mo-molybdopterin guanine dinucleotide + diphosphate. In terms of biological role, transfers a GMP moiety from GTP to Mo-molybdopterin (Mo-MPT) cofactor (Moco or molybdenum cofactor) to form Mo-molybdopterin guanine dinucleotide (Mo-MGD) cofactor. This chain is Molybdenum cofactor guanylyltransferase, found in Cupriavidus pinatubonensis (strain JMP 134 / LMG 1197) (Cupriavidus necator (strain JMP 134)).